The chain runs to 395 residues: S-adenosylmethionine synthase (395 aa).

Residue His16 participates in ATP binding. Asp18 contributes to the Mg(2+) binding site. Glu44 lines the K(+) pocket. Residues Glu57 and Gln100 each coordinate L-methionine. Residues 100–110 (QSPDIAQGVDR) form a flexible loop region. ATP contacts are provided by residues 167–169 (DAK), 233–234 (RF), Asp242, 248–249 (RK), Ala265, and Lys269. Asp242 contributes to the L-methionine binding site. An L-methionine-binding site is contributed by Lys273.

Belongs to the AdoMet synthase family. As to quaternary structure, homotetramer; dimer of dimers. Mg(2+) serves as cofactor. K(+) is required as a cofactor.

It is found in the cytoplasm. The catalysed reaction is L-methionine + ATP + H2O = S-adenosyl-L-methionine + phosphate + diphosphate. It participates in amino-acid biosynthesis; S-adenosyl-L-methionine biosynthesis; S-adenosyl-L-methionine from L-methionine: step 1/1. In terms of biological role, catalyzes the formation of S-adenosylmethionine (AdoMet) from methionine and ATP. The overall synthetic reaction is composed of two sequential steps, AdoMet formation and the subsequent tripolyphosphate hydrolysis which occurs prior to release of AdoMet from the enzyme. The chain is S-adenosylmethionine synthase from Burkholderia thailandensis (strain ATCC 700388 / DSM 13276 / CCUG 48851 / CIP 106301 / E264).